The sequence spans 747 residues: Tripartite terminase subunit 3 (747 aa).

The short motif at 194-198 (KRAKV) is the Nuclear localization signal element. Positions 267 to 274 (VPRRHGKT) match the Walker A motif motif. The short motif at 361-366 (LLFVDE) is the Walker B motif element. Catalysis depends on Glu-366, which acts as the For ATPase activity. Residues Asp-521, Glu-593, and Asp-722 each act as for nuclease activity in the active site.

It belongs to the herpesviridae TRM3 protein family. As to quaternary structure, interacts with the terminase subunits TRM1 and TRM2. Interacts with portal protein.

It localises to the host nucleus. Component of the molecular motor that translocates viral genomic DNA in empty capsid during DNA packaging. Forms a tripartite terminase complex together with TRM1 and TRM2 in the host cytoplasm. Once the complex reaches the host nucleus, it interacts with the capsid portal vertex. This portal forms a ring in which genomic DNA is translocated into the capsid. TRM3 carries an RNase H-like nuclease activity that plays an important role for the cleavage of concatemeric viral DNA into unit length genomes. The protein is Tripartite terminase subunit 3 of Homo sapiens (Human).